We begin with the raw amino-acid sequence, 809 residues long: LPS-assembly protein LptD (809 aa).

Residues 1–22 (MRRALRLLPLPLSIAICLPAMA) form the signal peptide.

The protein belongs to the LptD family. Component of the lipopolysaccharide transport and assembly complex. Interacts with LptE and LptA.

It localises to the cell outer membrane. Its function is as follows. Together with LptE, is involved in the assembly of lipopolysaccharide (LPS) at the surface of the outer membrane. The chain is LPS-assembly protein LptD from Xanthomonas campestris pv. campestris (strain 8004).